Reading from the N-terminus, the 939-residue chain is Valine--tRNA ligase (939 aa).

The 'HIGH' region signature appears at 47–57 (PNVTGILHMGH). Residues 563-567 (KLSKS) carry the 'KMSKS' region motif. Residue K566 coordinates ATP. Residues 873–939 (AEHLAKEHAR…QSILDKIASL (67 aa)) are a coiled coil.

It belongs to the class-I aminoacyl-tRNA synthetase family. ValS type 1 subfamily. As to quaternary structure, monomer.

Its subcellular location is the cytoplasm. It carries out the reaction tRNA(Val) + L-valine + ATP = L-valyl-tRNA(Val) + AMP + diphosphate. In terms of biological role, catalyzes the attachment of valine to tRNA(Val). As ValRS can inadvertently accommodate and process structurally similar amino acids such as threonine, to avoid such errors, it has a 'posttransfer' editing activity that hydrolyzes mischarged Thr-tRNA(Val) in a tRNA-dependent manner. In Chlamydia muridarum (strain MoPn / Nigg), this protein is Valine--tRNA ligase.